A 3003-amino-acid chain; its full sequence is MAX gene-associated protein (3003 aa).

Glycyl lysine isopeptide (Lys-Gly) (interchain with G-Cter in SUMO2) cross-links involve residues lysine 4 and lysine 178. The T-box DNA-binding region spans 84-260 (MWNEFHNRST…YNPFAKGFRD (177 aa)). The segment covering 259–277 (RDDGLSSKPQREGKQRNSS) has biased composition (basic and acidic residues). A disordered region spans residues 259-290 (RDDGLSSKPQREGKQRNSSDQEGNSVSSSPAH). The span at 278–288 (DQEGNSVSSSP) shows a compositional bias: polar residues. Residues lysine 323, lysine 329, lysine 348, lysine 431, lysine 458, lysine 463, and lysine 480 each participate in a glycyl lysine isopeptide (Lys-Gly) (interchain with G-Cter in SUMO2) cross-link. Serine 531 is subject to Phosphoserine. Residues 553-647 (ILDNSSTERI…NIPVGPGSTF (95 aa)) form a disordered region. Lysine 567 participates in a covalent cross-link: Glycyl lysine isopeptide (Lys-Gly) (interchain with G-Cter in SUMO2). The span at 595–607 (KTVTASHSASPNT) shows a compositional bias: polar residues. Serine 604 is subject to Phosphoserine. Residues lysine 610, lysine 651, lysine 782, lysine 788, lysine 814, and lysine 823 each participate in a glycyl lysine isopeptide (Lys-Gly) (interchain with G-Cter in SUMO2) cross-link. The span at 610-621 (KRGRPRKLRLSK) shows a compositional bias: basic residues. The residue at position 848 (serine 848) is a Phosphoserine. The span at 871-913 (KQSTISPSTSHSVKPQSVTTASRKTKAQNKQTTLSGRTKSSYK) shows a compositional bias: polar residues. 2 disordered regions span residues 871 to 946 (KQST…TSDN) and 967 to 987 (LRQA…GLSK). Serine 921 bears the Phosphoserine mark. Lysine 925 participates in a covalent cross-link: Glycyl lysine isopeptide (Lys-Gly) (interchain with G-Cter in SUMO2). Positions 937-946 (KNSLSSTSDN) are enriched in polar residues. The segment covering 969 to 978 (QAQQQHLQQQ) has biased composition (low complexity). Residues lysine 987 and lysine 1088 each participate in a glycyl lysine isopeptide (Lys-Gly) (interchain with G-Cter in SUMO2) cross-link. The tract at residues 1111–1130 (LGEEGREGGGVREDEEQLKE) is disordered. The segment covering 1113–1122 (EEGREGGGVR) has biased composition (basic and acidic residues). Residues lysine 1136, lysine 1158, lysine 1194, and lysine 1202 each participate in a glycyl lysine isopeptide (Lys-Gly) (interchain with G-Cter in SUMO2) cross-link. Disordered regions lie at residues 1186–1215 (QPDL…NPVI), 1246–1277 (QRQL…TKEL), 1297–1323 (SQEK…RSPG), and 1376–1424 (RGEK…DISP). Low complexity-rich tracts occupy residues 1248 to 1269 (QLSP…YSSP) and 1303 to 1315 (KSSC…SSTS). A phosphoserine mark is found at serine 1423 and serine 1450. Residues lysine 1454 and lysine 1495 each participate in a glycyl lysine isopeptide (Lys-Gly) (interchain with G-Cter in SUMO2) cross-link. Disordered regions lie at residues 1476-1508 (AKVA…RSGK), 1722-1746 (PPVS…SNNV), 1856-1885 (ISPP…PVGT), 1920-1954 (IKKE…KALD), 1964-1983 (SGII…GGDL), and 1988-2038 (TLRE…AGSK). Polar residues-rich tracts occupy residues 1488–1507 (LPST…NRSG), 1735–1746 (PVTTPQISSNNV), and 1859–1880 (PETQ…STGG). Residues lysine 1937 and lysine 1944 each participate in a glycyl lysine isopeptide (Lys-Gly) (interchain with G-Cter in SUMO2) cross-link. Positions 1964–1976 (SGIIASENTSNNS) are enriched in polar residues. Glycyl lysine isopeptide (Lys-Gly) (interchain with G-Cter in SUMO2) cross-links involve residues lysine 2060 and lysine 2084. The interval 2087-2110 (LSGNQVKEQQSNSQAEAKKDCEDS) is disordered. Positions 2088–2101 (SGNQVKEQQSNSQA) are enriched in polar residues. Glycyl lysine isopeptide (Lys-Gly) (interchain with G-Cter in SUMO2) cross-links involve residues lysine 2104, lysine 2152, and lysine 2179. Omega-N-methylarginine is present on arginine 2206. A disordered region spans residues 2207-2255 (GSRHFQGHLLLPREQMKPKQQTKDGRSSAADFTVLDLEDEDEEDEKTDD). Positions 2220 to 2232 (EQMKPKQQTKDGR) are enriched in basic and acidic residues. Lysine 2225 participates in a covalent cross-link: Glycyl lysine isopeptide (Lys-Gly) (interchain with G-Cter in SUMO2). Positions 2242–2255 (DLEDEDEEDEKTDD) are enriched in acidic residues. Residues lysine 2317, lysine 2352, lysine 2396, and lysine 2471 each participate in a glycyl lysine isopeptide (Lys-Gly) (interchain with G-Cter in SUMO2) cross-link. A bHLH domain is found at 2362 to 2413 (YYRRTHTANERRRRGEMRDLFEKLKITLGLLHSSKVSKSLILNRAFSEIQGL). Serine 2480 is subject to Phosphoserine. The interval 2515-2534 (KRDQATENASPSDTPHSSAN) is disordered. The span at 2520 to 2534 (TENASPSDTPHSSAN) shows a compositional bias: polar residues. Glycyl lysine isopeptide (Lys-Gly) (interchain with G-Cter in SUMO2) cross-links involve residues lysine 2568 and lysine 2618. Residues 2629 to 2651 (SEASSLKDTERISSRGNHRDSRK) are compositionally biased toward basic and acidic residues. The interval 2629–2654 (SEASSLKDTERISSRGNHRDSRKALG) is disordered. A Glycyl lysine isopeptide (Lys-Gly) (interchain with G-Cter in SUMO2) cross-link involves residue lysine 2724. Phosphoserine is present on residues serine 2849 and serine 2860. A disordered region spans residues 2877-2917 (LVSHRKSSDGGQSTSGLPAEPESVSSPPILHMKTGPENSNT). Lysine 2979 is covalently cross-linked (Glycyl lysine isopeptide (Lys-Gly) (interchain with G-Cter in SUMO2)).

Component of some MLL1/MLL complex, at least composed of the core components KMT2A/MLL1, ASH2L, HCFC1/HCF1, WDR5 and RBBP5, as well as the facultative components BACC1, CHD8, E2F6, HSP70, INO80C, KANSL1, LAS1L, MAX, MCRS1, MGA, MYST1/MOF, PELP1, PHF20, PRP31, RING2, RUVB1/TIP49A, RUVB2/TIP49B, SENP3, TAF1, TAF4, TAF6, TAF7, TAF9 and TEX10. Interacts with ZMYND11. Interacts with MAX. Requires heterodimerization with MAX for E-box binding. In terms of tissue distribution, highly expressed in germ cells and granulosa cells.

Its subcellular location is the nucleus. Functionally, functions as a dual-specificity transcription factor, regulating the expression of both MAX-network and T-box family target genes. Functions as a repressor or an activator. Binds to 5'-AATTTCACACCTAGGTGTGAAATT-3' core sequence and seems to regulate MYC-MAX target genes. Suppresses transcriptional activation by MYC and inhibits MYC-dependent cell transformation. Function activated by heterodimerization with MAX. This heterodimerization serves the dual function of both generating an E-box-binding heterodimer and simultaneously blocking interaction of a corepressor. The protein is MAX gene-associated protein of Mus musculus (Mouse).